We begin with the raw amino-acid sequence, 582 residues long: MEPSKLFTISDNATFAPGPVINVADKKTFRTCFRILVLSVQAVTLILVIVNLGELVRMINDQGLSNQLSSITDKIRESANMIASAVGVMNQVIHGVTVSLPLQIEGNQNQLLSTLATICTSKKQVSNCSTNIPLVNDLRFINGINKFIIEDYATHDFSIGHPLNMPSFIPTATSPNGCTRIPSFSLGKTHWCYTHNVINANCKDHTSSNQYVSMGILVQTASGYPMFKTLKIQYLSDGLNRKSCSIATVPDGCAMYCYISTQLETDDYAGSSPPTQKLTLLFYNDTVTERTISPSGLEGNWATLVPGVGSGIYFENKLIFPAYGGVLPNSTLGVKSAREFFRPVNPYNPCSGPQQDLDQRALRSYFPSYFSNRRVQSAFLVCAWNQILVTNCELVVPSNNQTLMGAEGRVLLINNRLLYYQRSTSWWPYELLYEISFTFTNSGQSSVNMSWIPIYSFTRPGSGNCSGENVCPTACVSGVYLDPWPLTPYSHQSGINRNFYFTGALLNSSTTRVNPTLYVSALNNLKVLAPYGTQGLFASYTTTTCFQDTGDASVYCVYIMELASNIVGEFQILPVLTRLTIT.

The chain crosses the membrane as a helical span at residues 35 to 55; the sequence is ILVLSVQAVTLILVIVNLGEL. Disulfide bonds link cysteine 178–cysteine 202, cysteine 192–cysteine 253, and cysteine 244–cysteine 257. Asparagine 284 and asparagine 329 each carry an N-linked (GlcNAc...) asparagine; by host glycan. 3 disulfide bridges follow: cysteine 350–cysteine 471, cysteine 382–cysteine 392, and cysteine 465–cysteine 475. Asparagine 400 and asparagine 448 each carry an N-linked (GlcNAc...) asparagine; by host glycan. Asparagine 507 carries an N-linked (GlcNAc...) asparagine; by host glycan. Cysteine 545 and cysteine 556 form a disulfide bridge.

Belongs to the paramyxoviruses hemagglutinin-neuraminidase family. Homotetramer; composed of disulfide-linked homodimers. Interacts with F protein trimer.

The protein resides in the virion membrane. Its subcellular location is the host cell membrane. The enzyme catalyses Hydrolysis of alpha-(2-&gt;3)-, alpha-(2-&gt;6)-, alpha-(2-&gt;8)- glycosidic linkages of terminal sialic acid residues in oligosaccharides, glycoproteins, glycolipids, colominic acid and synthetic substrates.. In terms of biological role, attaches the virus to alpha-2,3-linked sialic acid-containing cell receptors and thereby initiating infection. Binding of HN protein to the receptor induces a conformational change that allows the F protein to trigger virion/cell membranes fusion. Binds to the glycan motifs sialyl Lewis (SLe) and GM2 ganglioside (GM2-glycan). Its function is as follows. Neuraminidase activity ensures the efficient spread of the virus by dissociating the mature virions from the neuraminic acid containing glycoproteins. In Homo sapiens (Human), this protein is Hemagglutinin-neuraminidase (HN).